The primary structure comprises 385 residues: Calcium/calmodulin-dependent protein kinase type 1D (385 aa).

The region spanning 23-279 is the Protein kinase domain; sequence FEFKETLGTG…CEQAARHPWI (257 aa). Residues 29–37 and Lys52 contribute to the ATP site; that span reads LGTGAFSEV. Residue Lys113 forms a Glycyl lysine isopeptide (Lys-Gly) (interchain with G-Cter in SUMO2) linkage. Phosphoserine is present on Ser122. Asp144 serves as the catalytic Proton acceptor. A Phosphothreonine; by CaMKK1 and CaMKK2 modification is found at Thr180. The interval 279–319 is autoinhibitory domain; the sequence is IAGDTALNKNIHESVSAQIRKNFAKSKWRQAFNATAVVRHM. Residues 299–320 form a calmodulin-binding region; that stretch reads KNFAKSKWRQAFNATAVVRHMR. The Nuclear export signal signature appears at 318–324; that stretch reads HMRKLHL. The tract at residues 360–385 is disordered; sequence SSGVSGVGAERRPRPTTVTAVHSGSK. The span at 375-385 shows a compositional bias: polar residues; sequence TTVTAVHSGSK.

Belongs to the protein kinase superfamily. CAMK Ser/Thr protein kinase family. CaMK subfamily. As to expression, widely expressed. Highly and mostly expressed in polymorphonuclear leukocytes (neutrophilic and eosinophilic granulocytes) while little or no expression is observed in monocytes and lymphocytes.

The protein resides in the cytoplasm. It localises to the nucleus. It carries out the reaction L-seryl-[protein] + ATP = O-phospho-L-seryl-[protein] + ADP + H(+). It catalyses the reaction L-threonyl-[protein] + ATP = O-phospho-L-threonyl-[protein] + ADP + H(+). With respect to regulation, activated by Ca(2+)/calmodulin. Binding of calmodulin results in conformational change that relieves intrasteric autoinhibition and allows phosphorylation of Thr-180 within the activation loop by CaMKK1 or CaMKK2. Phosphorylation of Thr-180 results in several fold increase in total activity. Unlike CaMK4, may be unable to exhibit autonomous activity after Ca(2+)/calmodulin activation. Calcium/calmodulin-dependent protein kinase that operates in the calcium-triggered CaMKK-CaMK1 signaling cascade and, upon calcium influx, activates CREB-dependent gene transcription, regulates calcium-mediated granulocyte function and respiratory burst and promotes basal dendritic growth of hippocampal neurons. In neutrophil cells, required for cytokine-induced proliferative responses and activation of the respiratory burst. Activates the transcription factor CREB1 in hippocampal neuron nuclei. May play a role in apoptosis of erythroleukemia cells. In vitro, phosphorylates transcription factor CREM isoform Beta. The chain is Calcium/calmodulin-dependent protein kinase type 1D (CAMK1D) from Homo sapiens (Human).